Consider the following 161-residue polypeptide: Phosphopantetheine adenylyltransferase (161 aa).

A substrate-binding site is contributed by serine 8. Residues 8–9 and histidine 16 contribute to the ATP site; that span reads SF. Residues lysine 40, threonine 72, and arginine 86 each coordinate substrate. ATP contacts are provided by residues 87–89, glutamate 97, and 122–128; these read GLR and HSFLSSS.

This sequence belongs to the bacterial CoaD family. In terms of assembly, homohexamer. Requires Mg(2+) as cofactor.

It localises to the cytoplasm. The catalysed reaction is (R)-4'-phosphopantetheine + ATP + H(+) = 3'-dephospho-CoA + diphosphate. It participates in cofactor biosynthesis; coenzyme A biosynthesis; CoA from (R)-pantothenate: step 4/5. In terms of biological role, reversibly transfers an adenylyl group from ATP to 4'-phosphopantetheine, yielding dephospho-CoA (dPCoA) and pyrophosphate. The polypeptide is Phosphopantetheine adenylyltransferase (Prochlorococcus marinus (strain SARG / CCMP1375 / SS120)).